We begin with the raw amino-acid sequence, 367 residues long: DNA replication and repair protein RecF (367 aa).

ATP is bound at residue glycine 30–threonine 37.

The protein belongs to the RecF family.

The protein resides in the cytoplasm. In terms of biological role, the RecF protein is involved in DNA metabolism; it is required for DNA replication and normal SOS inducibility. RecF binds preferentially to single-stranded, linear DNA. It also seems to bind ATP. The polypeptide is DNA replication and repair protein RecF (Pseudomonas fluorescens (strain Pf0-1)).